The sequence spans 266 residues: tRNA pseudouridine synthase A (266 aa).

Asp56 (nucleophile) is an active-site residue. Tyr110 lines the substrate pocket.

It belongs to the tRNA pseudouridine synthase TruA family.

It carries out the reaction uridine(38/39/40) in tRNA = pseudouridine(38/39/40) in tRNA. Its function is as follows. Formation of pseudouridine at positions 38, 39 and 40 in the anticodon stem and loop of transfer RNAs. The chain is tRNA pseudouridine synthase A from Halobacterium salinarum (strain ATCC 29341 / DSM 671 / R1).